Here is a 427-residue protein sequence, read N- to C-terminus: Diaminobutyrate--2-oxoglutarate transaminase (427 aa).

K264 bears the N6-(pyridoxal phosphate)lysine mark.

This sequence belongs to the class-III pyridoxal-phosphate-dependent aminotransferase family. Pyridoxal 5'-phosphate is required as a cofactor.

The catalysed reaction is L-2,4-diaminobutanoate + 2-oxoglutarate = L-aspartate 4-semialdehyde + L-glutamate. Its pathway is amine and polyamine biosynthesis; ectoine biosynthesis; L-ectoine from L-aspartate 4-semialdehyde: step 1/3. In terms of biological role, catalyzes reversively the conversion of L-aspartate beta-semialdehyde (ASA) to L-2,4-diaminobutyrate (DABA) by transamination with L-glutamate. The protein is Diaminobutyrate--2-oxoglutarate transaminase (ectB) of Wolinella succinogenes (strain ATCC 29543 / DSM 1740 / CCUG 13145 / JCM 31913 / LMG 7466 / NCTC 11488 / FDC 602W) (Vibrio succinogenes).